The primary structure comprises 349 residues: Alanine racemase (349 aa).

The active-site Proton acceptor; specific for D-alanine is Lys-35. Lys-35 is subject to N6-(pyridoxal phosphate)lysine. Arg-130 lines the substrate pocket. Residue Tyr-244 is the Proton acceptor; specific for L-alanine of the active site. Position 292 (Met-292) interacts with substrate.

This sequence belongs to the alanine racemase family. It depends on pyridoxal 5'-phosphate as a cofactor.

The catalysed reaction is L-alanine = D-alanine. The protein operates within amino-acid biosynthesis; D-alanine biosynthesis; D-alanine from L-alanine: step 1/1. Its function is as follows. Catalyzes the interconversion of L-alanine and D-alanine. May also act on other amino acids. The sequence is that of Alanine racemase (alr) from Cereibacter sphaeroides (strain KD131 / KCTC 12085) (Rhodobacter sphaeroides).